The following is a 231-amino-acid chain: Ribonuclease HII (231 aa).

The region spanning 23 to 214 (GPVAGVDEAG…VAKAHREWAL (192 aa)) is the RNase H type-2 domain. A divalent metal cation is bound by residues aspartate 29, glutamate 30, and aspartate 123.

Belongs to the RNase HII family. The cofactor is Mn(2+). Mg(2+) serves as cofactor.

The protein resides in the cytoplasm. It carries out the reaction Endonucleolytic cleavage to 5'-phosphomonoester.. In terms of biological role, endonuclease that specifically degrades the RNA of RNA-DNA hybrids. The sequence is that of Ribonuclease HII from Corynebacterium efficiens (strain DSM 44549 / YS-314 / AJ 12310 / JCM 11189 / NBRC 100395).